We begin with the raw amino-acid sequence, 141 residues long: Hemoglobin subunit alpha-A (141 aa).

Residues 1-141 (VLSAADKNNV…VGNVLTAKYR (141 aa)) form the Globin domain. His-58 contributes to the O2 binding site. His-87 is a heme b binding site.

It belongs to the globin family. In terms of assembly, heterotetramer of two alpha chains and two beta chains. As to expression, red blood cells.

Functionally, involved in oxygen transport from the lung to the various peripheral tissues. The chain is Hemoglobin subunit alpha-A (HBAA) from Francolinus pondicerianus (Grey francolin).